A 91-amino-acid polypeptide reads, in one-letter code: Small ribosomal subunit protein uS19 (91 aa).

This sequence belongs to the universal ribosomal protein uS19 family.

Its function is as follows. Protein S19 forms a complex with S13 that binds strongly to the 16S ribosomal RNA. The sequence is that of Small ribosomal subunit protein uS19 from Pseudoalteromonas atlantica (strain T6c / ATCC BAA-1087).